We begin with the raw amino-acid sequence, 167 residues long: Phosphopantetheine adenylyltransferase (167 aa).

S11 serves as a coordination point for substrate. Residues 11–12 (SF) and H19 each bind ATP. Substrate contacts are provided by K43, T76, and R90. Residues 91-93 (GIR), E101, and 126-132 (YDALSST) each bind ATP.

It belongs to the bacterial CoaD family. Homohexamer. Mg(2+) is required as a cofactor.

It localises to the cytoplasm. It carries out the reaction (R)-4'-phosphopantetheine + ATP + H(+) = 3'-dephospho-CoA + diphosphate. Its pathway is cofactor biosynthesis; coenzyme A biosynthesis; CoA from (R)-pantothenate: step 4/5. Reversibly transfers an adenylyl group from ATP to 4'-phosphopantetheine, yielding dephospho-CoA (dPCoA) and pyrophosphate. This chain is Phosphopantetheine adenylyltransferase, found in Lacticaseibacillus paracasei (strain ATCC 334 / BCRC 17002 / CCUG 31169 / CIP 107868 / KCTC 3260 / NRRL B-441) (Lactobacillus paracasei).